Reading from the N-terminus, the 396-residue chain is MGVLKTCVLRRSACAAACFWRRTVIPKPPFRGISTTSARSTVMPAWVIDKYGKNEVLRFTQNMMLPIIHYPNEVIIKVHAASVNPIDVNMRSGYGATALNMKRDPLHMKTKGEEFPLTLGRDVSGVVMECGLDVKYFQPGDEVWAAVPPWKQGTLSEFVVVSGNEVSHKPKSLTHTQAASLPYVALTAWSAINKVGGLSDKNCKGKRALILGASGGVGTFAIQVMKAWGAHVTAVCSKDASELVRKLGADEVIDYTLGSVEEQLKSLKLFDFILDNVGGSTETWALNFLKKWSGATYVTLVTPFLLNMDRLGVADGMLQTGVTVGTKALKHLWQGVHYRWAFFMASGPYLDEIAELVDAGKIRPVIERTFPFSEVPEAFLKVERGHARGKTVVNVV.

Residues 1 to 40 (MGVLKTCVLRRSACAAACFWRRTVIPKPPFRGISTTSARS) constitute a mitochondrion transit peptide. One can recognise an Enoyl reductase (ER) domain in the interval 52 to 393 (GKNEVLRFTQ…RGHARGKTVV (342 aa)). Residues Ser214, Gly216, Val217, Ser237, Tyr255, Asn276, Leu300, Ala341, Phe343, His386, Ala387, and Arg388 each coordinate NADPH.

The protein belongs to the zinc-containing alcohol dehydrogenase family. Quinone oxidoreductase subfamily. As to quaternary structure, interacts with RTN4, UQCRC1 and UQCRC2. In terms of tissue distribution, widely expressed in mitochondria-enriched tissues. Found in heart, kidney, liver, brain and spinal cord.

It localises to the mitochondrion matrix. The protein localises to the mitochondrion outer membrane. It carries out the reaction a 3-demethylubiquinone + NADH + 2 H(+) = a 3-demethylubiquinol + NAD(+). The enzyme catalyses a 3-demethylubiquinone + NADPH + 2 H(+) = a 3-demethylubiquinol + NADP(+). The catalysed reaction is 3-demethylubiquinone-10 + NADH + 2 H(+) = 3-demethylubiquinol-10 + NAD(+). It catalyses the reaction 3-demethylubiquinone-10 + NADPH + 2 H(+) = 3-demethylubiquinol-10 + NADP(+). It participates in cofactor biosynthesis; ubiquinone biosynthesis. Its function is as follows. NAD(P)H oxidoreductase involved in the ubiquinone biosynthetic pathway. Required for the O-methyltransferase activity of COQ3. Able to catalyze the oxidoreduction of 3-demethylubiquinone into 3-demethylubiquinol in vitro. However, it is unclear if 3-demethylubiquinone constitutes a substrate in vivo. May also play a role in the regulation of retinal ganglion cell (RGC) neurite outgrowth, and hence in the development of the inner retina and optic nerve. Appears to be a potent inhibitor of regeneration following spinal cord injury. The polypeptide is NAD(P)H oxidoreductase RTN4IP1, mitochondrial (Mus musculus (Mouse)).